The primary structure comprises 238 residues: Ribonuclease 3 (238 aa).

Positions 4 to 127 constitute an RNase III domain; it reads IEEFEKRLGY…TMGAIYLETG (124 aa). Glu40 is a binding site for Mg(2+). Asp44 is an active-site residue. Mg(2+) is bound by residues Asn113 and Glu116. The active site involves Glu116. The region spanning 154 to 223 is the DRBM domain; that stretch reads DYKTALQELT…ARIALEIFHR (70 aa).

The protein belongs to the ribonuclease III family. Homodimer. Mg(2+) is required as a cofactor.

The protein resides in the cytoplasm. The catalysed reaction is Endonucleolytic cleavage to 5'-phosphomonoester.. Its function is as follows. Digests double-stranded RNA. Involved in the processing of primary rRNA transcript to yield the immediate precursors to the large and small rRNAs (23S and 16S). Processes some mRNAs, and tRNAs when they are encoded in the rRNA operon. Processes pre-crRNA and tracrRNA of type II CRISPR loci if present in the organism. The polypeptide is Ribonuclease 3 (Wolinella succinogenes (strain ATCC 29543 / DSM 1740 / CCUG 13145 / JCM 31913 / LMG 7466 / NCTC 11488 / FDC 602W) (Vibrio succinogenes)).